We begin with the raw amino-acid sequence, 174 residues long: Ubiquitin-fold modifier-conjugating enzyme 1 (174 aa).

The active-site Glycyl thioester intermediate is the Cys119.

The protein belongs to the ubiquitin-conjugating enzyme family. UFC1 subfamily.

Functionally, E2-like enzyme which forms an intermediate with UFM1 via a thioester linkage. The sequence is that of Ubiquitin-fold modifier-conjugating enzyme 1 from Arabidopsis thaliana (Mouse-ear cress).